The following is a 153-amino-acid chain: Transcriptional repressor NrdR 2 (153 aa).

The segment at 3-34 (CPFCGQDDTQVKDSRPTDDNAAIRRRRACPGC) is a zinc-finger region. The ATP-cone domain occupies 49–139 (LVVVKKDGSR…VYRNFREAKD (91 aa)).

It belongs to the NrdR family. Zn(2+) serves as cofactor.

Negatively regulates transcription of bacterial ribonucleotide reductase nrd genes and operons by binding to NrdR-boxes. This chain is Transcriptional repressor NrdR 2, found in Paramagnetospirillum magneticum (strain ATCC 700264 / AMB-1) (Magnetospirillum magneticum).